A 37-amino-acid chain; its full sequence is Mau operon transcriptional activator (37 aa).

Belongs to the LysR transcriptional regulatory family.

Its function is as follows. Transcriptional activator of the mau genes involved in methylamine metabolism. The sequence is that of Mau operon transcriptional activator (mauR) from Paracoccus versutus (Thiobacillus versutus).